Here is a 961-residue protein sequence, read N- to C-terminus: Translation initiation factor IF-2 (961 aa).

Residues 146 to 158 (PSVPNKTLTTTPH) are compositionally biased toward polar residues. Residues 146–373 (PSVPNKTLTT…KTTSQVTTQP (228 aa)) form a disordered region. Positions 163–176 (NHSEKDVLESHDSS) are enriched in basic and acidic residues. A compositionally biased stretch (low complexity) spans 177–187 (NKNIKQSSSQN). Basic and acidic residues predominate over residues 230-239 (SEEKNVDIQQ). Polar residues-rich tracts occupy residues 241–285 (EIPS…TAPH) and 301–310 (YQGQNRNNFI). Residues 355 to 364 (NRGRKRHKQK) are compositionally biased toward basic residues. The tr-type G domain occupies 460–627 (RRPPVVTIMG…LLALQTDILE (168 aa)). The tract at residues 469-476 (GHVDHGKT) is G1. 469 to 476 (GHVDHGKT) provides a ligand contact to GTP. Residues 494 to 498 (GITQH) form a G2 region. The interval 515–518 (DTPG) is G3. Residues 515–519 (DTPGH) and 569–572 (NKMD) contribute to the GTP site. Residues 569-572 (NKMD) form a G4 region. Residues 605–607 (SAK) form a G5 region.

This sequence belongs to the TRAFAC class translation factor GTPase superfamily. Classic translation factor GTPase family. IF-2 subfamily.

Its subcellular location is the cytoplasm. Functionally, one of the essential components for the initiation of protein synthesis. Protects formylmethionyl-tRNA from spontaneous hydrolysis and promotes its binding to the 30S ribosomal subunits. Also involved in the hydrolysis of GTP during the formation of the 70S ribosomal complex. The protein is Translation initiation factor IF-2 of Lawsonia intracellularis (strain PHE/MN1-00).